Reading from the N-terminus, the 408-residue chain is Ribonuclease T2-like (408 aa).

The N-terminal stretch at 1-25 (MLQSIPGPQHILKALTGSLGLSTIF) is a signal peptide. 4 disulfide bridges follow: Cys-38/Cys-56, Cys-45/Cys-92, Cys-55/Cys-158, and Cys-100/Cys-150. Residue His-85 is part of the active site. Asn-108 carries an N-linked (GlcNAc...) asparagine glycan. Active-site residues include Glu-143 and His-147. Residue Asn-173 is glycosylated (N-linked (GlcNAc...) asparagine). A disulfide bridge links Cys-222 with Cys-257. The tract at residues 268–292 (KHREPSRTTDTPSQPTTTGTPFKGR) is disordered. Low complexity predominate over residues 275–288 (TTDTPSQPTTTGTP). The N-linked (GlcNAc...) asparagine glycan is linked to Asn-372.

Belongs to the RNase T2 family.

Its subcellular location is the vacuole lumen. The protein localises to the cytoplasm. It catalyses the reaction a ribonucleotidyl-ribonucleotide-RNA + H2O = a 3'-end 3'-phospho-ribonucleotide-RNA + a 5'-end dephospho-ribonucleoside-RNA + H(+). Functionally, rnase which modulates cell survival under stress conditions. Released from the vacuole to the cytoplasm during stress to promote tRNA and rRNA cleavage and to activate separately a downstream pathway that promotes cell death. Involved in cell size, vacuolar morphology and growth at high temperatures and high salt concentration. The polypeptide is Ribonuclease T2-like (rny1) (Aspergillus fumigatus (strain ATCC MYA-4609 / CBS 101355 / FGSC A1100 / Af293) (Neosartorya fumigata)).